Here is a 200-residue protein sequence, read N- to C-terminus: NADH-quinone oxidoreductase subunit C (200 aa).

Belongs to the complex I 30 kDa subunit family. In terms of assembly, NDH-1 is composed of 14 different subunits. Subunits NuoB, C, D, E, F, and G constitute the peripheral sector of the complex.

The protein resides in the cell inner membrane. It carries out the reaction a quinone + NADH + 5 H(+)(in) = a quinol + NAD(+) + 4 H(+)(out). Functionally, NDH-1 shuttles electrons from NADH, via FMN and iron-sulfur (Fe-S) centers, to quinones in the respiratory chain. The immediate electron acceptor for the enzyme in this species is believed to be ubiquinone. Couples the redox reaction to proton translocation (for every two electrons transferred, four hydrogen ions are translocated across the cytoplasmic membrane), and thus conserves the redox energy in a proton gradient. The polypeptide is NADH-quinone oxidoreductase subunit C (Ralstonia pickettii (strain 12J)).